The primary structure comprises 202 residues: GPI-anchored hemophore cfmB (202 aa).

A signal peptide spans 1–18 (MHFSRTSLILFAAGLASA). Residues 19–108 (QLPNVPGCSL…STTASETATT (90 aa)) enclose the CFEM domain. Disulfide bonds link cysteine 26-cysteine 67, cysteine 30-cysteine 62, cysteine 40-cysteine 48, and cysteine 50-cysteine 83. Residue aspartate 45 participates in heme binding. The disordered stretch occupies residues 94–171 (PVGAASTTAS…PSSQSTSASA (78 aa)). Positions 97–171 (AASTTASETA…PSSQSTSASA (75 aa)) are enriched in low complexity. A lipid anchor (GPI-anchor amidated asparagine) is attached at asparagine 180. Positions 181 to 202 (AGSEKANVAGVVAVAAAALYLL) are cleaved as a propeptide — removed in mature form.

It belongs to the RBT5 family. Post-translationally, the GPI-anchor is attached to the protein in the endoplasmic reticulum and serves to target the protein to the cell surface. There, the glucosamine-inositol phospholipid moiety is cleaved off and the GPI-modified mannoprotein is covalently attached via its lipidless GPI glycan remnant to the 1,6-beta-glucan of the outer cell wall layer.

The protein localises to the secreted. The protein resides in the cell wall. It localises to the cell membrane. In terms of biological role, GPI-anchored cell wall protein involved in stabilizing the cell wall. Not implicated in virulence, heme uptake and biofilm formation. In Aspergillus fumigatus (strain ATCC MYA-4609 / CBS 101355 / FGSC A1100 / Af293) (Neosartorya fumigata), this protein is GPI-anchored hemophore cfmB.